Reading from the N-terminus, the 69-residue chain is Alpha-conotoxin SrIA/SrIB (69 aa).

Residues Met1 to Ser21 form the signal peptide. A propeptide spanning residues Phe22–Arg48 is cleaved from the precursor. 2 disulfide bridges follow: Cys51/Cys57 and Cys52/Cys65. The tract at residues Ser53–Pro55 is ser-Xaa-Pro motif, crucial for potent interaction with nAChR. Pro55 carries the post-translational modification 4-hydroxyproline; in form Sr1A and Sr1B. At Glu60 the chain carries 4-carboxyglutamate; in form Sr1A. Glu63 bears the 4-carboxyglutamate; in form Sr1A and Sr1B mark. Gly66 carries the post-translational modification Glycine amide; in form Sr1A and Sr1B.

The protein belongs to the conotoxin A superfamily. In terms of processing, occurs in 2 forms which differ in the post-translational modification of Glu-60. In form SrA1 Glu-60 is 4-carboxyglutamate while in form SrA2 Glu-60 is unmodified. Expressed by the venom duct.

It localises to the secreted. Its function is as follows. Alpha-conotoxins act on postsynaptic membranes, they bind to the nicotinic acetylcholine receptors (nAChR) and thus inhibit them. Has weak blocking effects on muscle nAChR composed of alpha-1/beta-1/gamma/delta subunits and the central nervous system nAChR composed of alpha-4/beta-2 subunits. Does not detectably affect the peripheral nervous system nAChR composed of alpha-3/beta-4 subunits. Low toxin concentrations potentiate currents in muscle nAChR composed of alpha-1/beta-1/gamma/delta subunits and central nervous system nAChR composed of alpha-4/beta-2 subunits, but not the peripheral nervous system nAChR composed of alpha-3/beta-4 subunits. The chain is Alpha-conotoxin SrIA/SrIB from Conus spurius (Alphabet cone).